A 335-amino-acid polypeptide reads, in one-letter code: Galactosylgalactosylxylosylprotein 3-beta-glucuronosyltransferase 3 (335 aa).

Topologically, residues methionine 1–asparagine 7 are cytoplasmic. A helical; Signal-anchor for type II membrane protein membrane pass occupies residues valine 8–glycine 28. Over glutamine 29 to valine 335 the chain is Lumenal. Residues proline 82–tyrosine 84, aspartate 113, arginine 156, arginine 161, and aspartate 194–aspartate 196 each bind UDP-alpha-D-glucuronate. Aspartate 196 contacts Mn(2+). The interval tryptophan 243 to aspartate 252 is interaction with galactose moiety of substrate glycoprotein. The active-site Proton donor/acceptor is glutamate 281. N-linked (GlcNAc...) asparagine glycosylation is present at asparagine 300. Residue histidine 308–arginine 310 coordinates UDP-alpha-D-glucuronate. Residues glutamate 312–leucine 322 show a composition bias toward basic and acidic residues. Residues glutamate 312 to valine 335 are disordered.

Belongs to the glycosyltransferase 43 family. Homodimer; disulfide-linked. Interacts with PXYLP1; the interaction increases the 2-phosphoxylose phosphatase activity of PXYLP1 during completion of linkage region formation in a B3GAT3-mediated manner. It depends on Mn(2+) as a cofactor. N-glycosylated. As to expression, ubiquitous (but weakly expressed in all tissues examined).

The protein resides in the golgi apparatus membrane. It localises to the golgi apparatus. It is found in the cis-Golgi network. It catalyses the reaction 3-O-(beta-D-galactosyl-(1-&gt;3)-beta-D-galactosyl-(1-&gt;4)-beta-D-xylosyl)-L-seryl-[protein] + UDP-alpha-D-glucuronate = 3-O-(beta-D-GlcA-(1-&gt;3)-beta-D-Gal-(1-&gt;3)-beta-D-Gal-(1-&gt;4)-beta-D-Xyl)-L-seryl-[protein] + UDP + H(+). The protein operates within protein modification; protein glycosylation. With respect to regulation, inhibited by EDTA. Glycosaminoglycans biosynthesis. Involved in forming the linkage tetrasaccharide present in heparan sulfate and chondroitin sulfate. Transfers a glucuronic acid moiety from the uridine diphosphate-glucuronic acid (UDP-GlcUA) to the common linkage region trisaccharide Gal-beta-1,3-Gal-beta-1,4-Xyl covalently bound to a Ser residue at the glycosaminylglycan attachment site of proteoglycans. Can also play a role in the biosynthesis of l2/HNK-1 carbohydrate epitope on glycoproteins. Shows strict specificity for Gal-beta-1,3-Gal-beta-1,4-Xyl, exhibiting negligible incorporation into other galactoside substrates including Galbeta1-3Gal beta1-O-benzyl, Galbeta1-4GlcNAc and Galbeta1-4Glc. Stimulates 2-phosphoxylose phosphatase activity of PXYLP1 in presence of uridine diphosphate-glucuronic acid (UDP-GlcUA) during completion of linkage region formation. The chain is Galactosylgalactosylxylosylprotein 3-beta-glucuronosyltransferase 3 (B3GAT3) from Homo sapiens (Human).